Consider the following 133-residue polypeptide: NADPH-dependent 7-cyano-7-deazaguanine reductase (133 aa).

Catalysis depends on C49, which acts as the Thioimide intermediate. Residue D56 is the Proton donor of the active site. Residues 71 to 73 (IEL) and 90 to 91 (HE) contribute to the substrate site.

It belongs to the GTP cyclohydrolase I family. QueF type 1 subfamily.

The protein localises to the cytoplasm. It catalyses the reaction 7-aminomethyl-7-carbaguanine + 2 NADP(+) = 7-cyano-7-deazaguanine + 2 NADPH + 3 H(+). The protein operates within tRNA modification; tRNA-queuosine biosynthesis. Its function is as follows. Catalyzes the NADPH-dependent reduction of 7-cyano-7-deazaguanine (preQ0) to 7-aminomethyl-7-deazaguanine (preQ1). This Leptospira borgpetersenii serovar Hardjo-bovis (strain JB197) protein is NADPH-dependent 7-cyano-7-deazaguanine reductase.